Reading from the N-terminus, the 730-residue chain is Envelope glycoprotein H (730 aa).

Residues 1–21 (MQGLAFLAALACWRCISLTCG) form the signal peptide. At 22–706 (ATGALPTTAT…MYRRRAASAL (685 aa)) the chain is on the virion surface side. Residues N46, N54, N101, N125, N131, N188, N209, N215, N267, N274, N365, N556, N613, N626, and N688 are each glycosylated (N-linked (GlcNAc...) asparagine; by host). Residues 190–254 (SGVALYGVVS…RNAKYALVAI (65 aa)) form an interaction with gL region. A helical transmembrane segment spans residues 707–727 (FLILSFIGFSGVIYFLYRLFS). Residues 728-730 (ILY) are Intravirion-facing.

Belongs to the herpesviridae glycoprotein H family. In terms of assembly, interacts with glycoprotein L (gL); this interaction is necessary for the correct processing and cell surface expression of gH. The heterodimer gH/gL seems to interact with gB trimers during fusion. When in complex with gL, interacts with host EPHA2; this interaction triggers EPHA2 phosphorylation and endocytosis allowing KSHV entry. Post-translationally, N-glycosylated, O-glycosylated, and sialylated.

It localises to the virion membrane. The protein resides in the host cell membrane. It is found in the host endosome membrane. Functionally, the heterodimer glycoprotein H-glycoprotein L is required for the fusion of viral and plasma membranes leading to virus entry into the host cell. Following initial binding to host receptor, membrane fusion is mediated by the fusion machinery composed of gB and the heterodimer gH/gL. May also be involved in the fusion between the virion envelope and the outer nuclear membrane during virion morphogenesis. Targets host EPHA2 to promote KSHV entry. The sequence is that of Envelope glycoprotein H from Homo sapiens (Human).